The primary structure comprises 399 residues: S-adenosylmethionine synthase (399 aa).

His16 contributes to the ATP binding site. Asp18 serves as a coordination point for Mg(2+). Glu44 contacts K(+). The L-methionine site is built by Glu57 and Gln100. Residues 100–110 (QSPDIAQGVDT) are flexible loop. ATP is bound by residues 175 to 177 (DGK), 246 to 247 (KF), Asp255, 261 to 262 (RK), Ala278, and Lys282. Asp255 is a binding site for L-methionine. Lys286 contacts L-methionine. Residue Lys341 forms an Isoglutamyl lysine isopeptide (Lys-Gln) (interchain with Q-Cter in protein Pup) linkage.

The protein belongs to the AdoMet synthase family. Homotetramer; dimer of dimers. The cofactor is Mg(2+). K(+) serves as cofactor.

The protein resides in the cytoplasm. It catalyses the reaction L-methionine + ATP + H2O = S-adenosyl-L-methionine + phosphate + diphosphate. The protein operates within amino-acid biosynthesis; S-adenosyl-L-methionine biosynthesis; S-adenosyl-L-methionine from L-methionine: step 1/1. Its function is as follows. Catalyzes the formation of S-adenosylmethionine (AdoMet) from methionine and ATP. The overall synthetic reaction is composed of two sequential steps, AdoMet formation and the subsequent tripolyphosphate hydrolysis which occurs prior to release of AdoMet from the enzyme. The chain is S-adenosylmethionine synthase from Mycolicibacterium smegmatis (strain ATCC 700084 / mc(2)155) (Mycobacterium smegmatis).